The following is a 314-amino-acid chain: Methionyl-tRNA formyltransferase (314 aa).

Position 110-113 (110-113 (SLLP)) interacts with (6S)-5,6,7,8-tetrahydrofolate.

The protein belongs to the Fmt family.

The catalysed reaction is L-methionyl-tRNA(fMet) + (6R)-10-formyltetrahydrofolate = N-formyl-L-methionyl-tRNA(fMet) + (6S)-5,6,7,8-tetrahydrofolate + H(+). Functionally, attaches a formyl group to the free amino group of methionyl-tRNA(fMet). The formyl group appears to play a dual role in the initiator identity of N-formylmethionyl-tRNA by promoting its recognition by IF2 and preventing the misappropriation of this tRNA by the elongation apparatus. In Bacillus anthracis (strain A0248), this protein is Methionyl-tRNA formyltransferase.